Consider the following 482-residue polypeptide: ATP synthase subunit beta (482 aa).

161–168 (GGAGVGKT) contacts ATP.

The protein belongs to the ATPase alpha/beta chains family. F-type ATPases have 2 components, CF(1) - the catalytic core - and CF(0) - the membrane proton channel. CF(1) has five subunits: alpha(3), beta(3), gamma(1), delta(1), epsilon(1). CF(0) has three main subunits: a(1), b(2) and c(9-12). The alpha and beta chains form an alternating ring which encloses part of the gamma chain. CF(1) is attached to CF(0) by a central stalk formed by the gamma and epsilon chains, while a peripheral stalk is formed by the delta and b chains.

It is found in the cell inner membrane. It catalyses the reaction ATP + H2O + 4 H(+)(in) = ADP + phosphate + 5 H(+)(out). Its function is as follows. Produces ATP from ADP in the presence of a proton gradient across the membrane. The catalytic sites are hosted primarily by the beta subunits. The chain is ATP synthase subunit beta from Anaeromyxobacter dehalogenans (strain 2CP-C).